The following is a 183-amino-acid chain: Small ribosomal subunit protein uS4c (183 aa).

Residues 82–143 form the S4 RNA-binding domain; it reads MRLDNILFRL…KQRSKALIQN (62 aa).

It belongs to the universal ribosomal protein uS4 family. In terms of assembly, part of the 30S ribosomal subunit. Contacts protein S5. The interaction surface between S4 and S5 is involved in control of translational fidelity.

It is found in the plastid. Its subcellular location is the chloroplast. Functionally, one of the primary rRNA binding proteins, it binds directly to 16S rRNA where it nucleates assembly of the body of the 30S subunit. In terms of biological role, with S5 and S12 plays an important role in translational accuracy. In Babiana stricta (Baboon flower), this protein is Small ribosomal subunit protein uS4c (rps4).